A 631-amino-acid chain; its full sequence is NADPH oxidoreductase A (631 aa).

The Flavodoxin-like domain occupies 73-212; the sequence is ILILYGTEYG…CFDRYIDTVC (140 aa). Residues 79–83 and 160–191 each bind FMN; these read TEYGL and VLALGDRSYPHYCAAGKTLDKQFEEMGAKRFR. The FAD-binding FR-type domain occupies 247 to 480; the sequence is KKPYSSKLLV…INNNPDFRLP (234 aa). 249 to 299 contributes to the FAD binding site; that stretch reads PYSSKLLVKRVLTKGDKVGIHLEFELGDSELKYVPGDALAILPDNAASEVS. Residue 504–630 coordinates NADP(+); that stretch reads QERKALGHTG…KEKRYQKDVW (127 aa).

FAD serves as cofactor. FMN is required as a cofactor.

Probable NADPH oxidoreductase that controls development beyond the mound stage. The polypeptide is NADPH oxidoreductase A (redA) (Dictyostelium discoideum (Social amoeba)).